The primary structure comprises 138 residues: Small ribosomal subunit protein uS11c (138 aa).

The protein belongs to the universal ribosomal protein uS11 family. Part of the 30S ribosomal subunit.

The protein localises to the plastid. This chain is Small ribosomal subunit protein uS11c, found in Cuscuta gronovii (Common dodder).